The following is a 417-amino-acid chain: MADIKNYTLNFGPQHPAAHGVLRLVLELDGEVIQRADPHIGLLHRATEKLAEQKTWIQSVPYMDRLDYVSMMVNEHAYVMAIERLLGLEVPIRAQYIRVMFDEITRLLNHLMWIGSHALDVGAMAVFLYAFREREDMFDMYEAVSGARMHAAYYRPGGVYRDLPDTMPQYRASKVHNEKAIKVMNEARSGSLLDFIEDFTNRFPTYVDEYETLLTDNRIWKQRLVDIGVVTPERALQMGFTGPMLRGSGIEWDLRKKQPYEVYDKMDFDIPVGTAGDCYSRYLVRVEEMRQSNRIIKQCIDWLRRNPGPVITENHKVAPPSRVDMKSNMEELIHHFKLFTEGIHVPAGEAYAAVEHPKGEFGIYAISDGANKPYRLKIRAPGFVHLAALDEMARGHMIADAVTIIGTQDIVFGEIDR.

It belongs to the complex I 49 kDa subunit family. In terms of assembly, NDH-1 is composed of 14 different subunits. Subunits NuoB, C, D, E, F, and G constitute the peripheral sector of the complex.

The protein resides in the cell inner membrane. It carries out the reaction a quinone + NADH + 5 H(+)(in) = a quinol + NAD(+) + 4 H(+)(out). In terms of biological role, NDH-1 shuttles electrons from NADH, via FMN and iron-sulfur (Fe-S) centers, to quinones in the respiratory chain. The immediate electron acceptor for the enzyme in this species is believed to be ubiquinone. Couples the redox reaction to proton translocation (for every two electrons transferred, four hydrogen ions are translocated across the cytoplasmic membrane), and thus conserves the redox energy in a proton gradient. This is NADH-quinone oxidoreductase subunit D from Cupriavidus metallidurans (strain ATCC 43123 / DSM 2839 / NBRC 102507 / CH34) (Ralstonia metallidurans).